The primary structure comprises 94 residues: Neurotoxin LmNaTx45.2 (94 aa).

The first 18 residues, 1 to 18 (MKLAILSLFLVFQIGVES), serve as a signal peptide directing secretion. The LCN-type CS-alpha/beta domain maps to 20 to 86 (KNGFALDHYG…IGDSRKNYCD (67 aa)). 4 cysteine pairs are disulfide-bonded: cysteine 34-cysteine 85, cysteine 44-cysteine 63, cysteine 48-cysteine 65, and cysteine 59-cysteine 85.

It belongs to the long (4 C-C) scorpion toxin superfamily. Sodium channel inhibitor family. Beta subfamily. Expressed by the venom gland.

The protein resides in the secreted. Functionally, binds voltage-independently at site-4 of sodium channels (Nav) and shift the voltage of activation toward more negative potentials thereby affecting sodium channel activation and promoting spontaneous and repetitive firing. The protein is Neurotoxin LmNaTx45.2 of Lychas mucronatus (Chinese swimming scorpion).